The sequence spans 1819 residues: U3 small nucleolar RNA-associated protein 10 (1819 aa).

Residues 583-620 form an HEAT 1 repeat; sequence LDFQAILPFLLVALADPSERIRREAAAALAAIGGIYKK. Transmembrane regions (helical) follow at residues 945–965 and 1001–1021; these read IQSGMSYLLSLTLGSLLAIVN and ALLLVSGLSVIAPELVLHSVM. HEAT repeat units follow at residues 1045-1082, 1269-1306, 1313-1351, and 1775-1812; these read QTIDQVVPALIQSLRNQKRDVVSGTSELLLSFTAAFEH, LTLVDFLDTIEVLLQRPSDELRRKVLRLLEGRLRQNPE, IRVLDFLPTLVDIVRSSPDILLKHAAVACIDRIAEKYGK, and ALLPEMLPYISELMEDEDENVEREVRKWVKQIENVLGE.

Belongs to the HEATR1/UTP10 family. As to quaternary structure, component of the ribosomal small subunit (SSU) processome.

It is found in the nucleus. It localises to the nucleolus. The protein localises to the membrane. Functionally, involved in nucleolar processing of pre-18S ribosomal RNA. Involved in ribosome biosynthesis. In Aspergillus clavatus (strain ATCC 1007 / CBS 513.65 / DSM 816 / NCTC 3887 / NRRL 1 / QM 1276 / 107), this protein is U3 small nucleolar RNA-associated protein 10.